A 208-amino-acid polypeptide reads, in one-letter code: Small ribosomal subunit protein uS4 (208 aa).

An S4 RNA-binding domain is found at 98-166 (SRLDNVVYRM…VKEAIEASRN (69 aa)).

It belongs to the universal ribosomal protein uS4 family. In terms of assembly, part of the 30S ribosomal subunit. Contacts protein S5. The interaction surface between S4 and S5 is involved in control of translational fidelity.

One of the primary rRNA binding proteins, it binds directly to 16S rRNA where it nucleates assembly of the body of the 30S subunit. In terms of biological role, with S5 and S12 plays an important role in translational accuracy. The chain is Small ribosomal subunit protein uS4 from Kosmotoga olearia (strain ATCC BAA-1733 / DSM 21960 / TBF 19.5.1).